The sequence spans 694 residues: Elongation factor G (694 aa).

One can recognise a tr-type G domain in the interval 8–287 (EDYRNFGIMA…AVVEFLPAPT (280 aa)). Residues 17-24 (AHIDAGKT), 86-90 (DTPGH), and 140-143 (NKMD) contribute to the GTP site.

It belongs to the TRAFAC class translation factor GTPase superfamily. Classic translation factor GTPase family. EF-G/EF-2 subfamily.

The protein localises to the cytoplasm. Functionally, catalyzes the GTP-dependent ribosomal translocation step during translation elongation. During this step, the ribosome changes from the pre-translocational (PRE) to the post-translocational (POST) state as the newly formed A-site-bound peptidyl-tRNA and P-site-bound deacylated tRNA move to the P and E sites, respectively. Catalyzes the coordinated movement of the two tRNA molecules, the mRNA and conformational changes in the ribosome. The chain is Elongation factor G from Brucella abortus (strain S19).